The sequence spans 928 residues: MAGNIVKWWKHKILGGYKQFSVQECTTDSEELMYHQVRASSSCSAPPDLLLVSERDNNIQLRSPVVNIITTPPGNASGAGSKQQSHHQTNHHSSGRSHPGHTAHPQDVSSGGSHSKHLRISSTSNGKHGKYSNMQQQLPQDEDVVDAAATMQQQQHTGHAHSRHLHHHKEERIRLEEFTCDVSVEGGKSSQPLQFSFTFYDLDGHHGKITKDDIVGIVYTIYESIGKSVVVPHCGSKTINVRLTVSPEGKSKSQPVVPVPVAAGFSSSHASKLKKLPTGLAAMSKPLAGGGVGSGGASALTTSAGNRRQHRYRPRKLIKSDDEDDDSNSEKEKDAAHAPAADQPSGSGTKATGKSHHHQSQSARYHQKNNSRAEQCCTEQNTPDNGHNTYENMLNLKCCKPEVDQVDCPSHRQHHQSHPNHQMRQQDIYMKQATQRVKMLRRARKQKYQDHCLETRQRSLSVGNDSACPNRHLQLQQPPVGHPQPQSLNHKSASGSPPLGVGGGGDMMLDGVQLRQPRPHSLTPHQHQQQNQQQQQQQRKSAECWKSALNRNDLISIIRESMEKNRLCFQLNGKPQANVSPIRQPAAQQQPQQQQRQRCNTGSKIPTLITNHSPVAQQSPLSCSPPTAEPTTPSIPAAPPAIEVNGQQHHPTHPTHPSHHNHHEHPQPHIPIYHQQLAINPAVLAAQQTHNTAHNKLNLCGYDSFLHATICGGGAAAHSPPATPSNVATVQPIPKKSQKNLLQGYQRLEQSQQQQQQQRSSKDYKNYGNLIYAKLSEQLQQKDREQRRQRHKQQQHQMLQDQPKDASRSEQRPPTSNSSSAGSKIYGDAVECAHLLASEEEDLPPSPQLTSTPSKVVSTDTLIDLNDDVGEAVAEAVTEGGKQSLEAEESGQQVEVELDTSASSSMIHRYVHEHIHHHYHHFKEQQDV.

Polar residues predominate over residues 68–80 (IITTPPGNASGAG). Residues 68 to 133 (IITTPPGNAS…SNGKHGKYSN (66 aa)) are disordered. Residues 84–101 (QSHHQTNHHSSGRSHPGH) are compositionally biased toward basic residues. A compositionally biased stretch (polar residues) spans 120 to 133 (ISSTSNGKHGKYSN). The interval 177–253 (EFTCDVSVEG…TVSPEGKSKS (77 aa)) is interaction with dsh. In terms of domain architecture, EF-hand spans 188–224 (KSSQPLQFSFTFYDLDGHHGKITKDDIVGIVYTIYES). The important for binding to zinc stretch occupies residues 227 to 372 (KSVVVPHCGS…ARYHQKNNSR (146 aa)). Disordered stretches follow at residues 291–368 (GVGS…YHQK), 462–543 (VGND…KSAE), 578–600 (NVSPIRQPAAQQQPQQQQRQRCN), 614–668 (PVAQ…HPQP), and 779–825 (LQQK…GSKI). Positions 307–317 (RRQHRYRPRKL) are enriched in basic residues. 3 positions are modified to phosphoserine: Ser320, Ser327, and Ser329. Residues 353 to 368 (GKSHHHQSQSARYHQK) are compositionally biased toward basic residues. Residues 484-493 (QPQSLNHKSA) show a composition bias toward polar residues. A compositionally biased stretch (low complexity) spans 525 to 538 (HQHQQQNQQQQQQQ). The tract at residues 543–572 (ECWKSALNRNDLISIIRESMEKNRLCFQLN) is required for nuclear localization and inhibition of Wnt signaling. Composition is skewed to low complexity over residues 583–598 (RQPAAQQQPQQQQRQR) and 624–649 (SPPTAEPTTPSIPAAPPAIEVNGQQH). The span at 650–663 (HPTHPTHPSHHNHH) shows a compositional bias: basic residues. Residues 802-811 (QPKDASRSEQ) are compositionally biased toward basic and acidic residues. Over residues 812 to 822 (RPPTSNSSSAG) the composition is skewed to polar residues.

It belongs to the NKD family. Interacts with dsh. This interaction may be stabilized by zinc.

Its subcellular location is the cell membrane. It is found in the cytoplasm. The protein localises to the nucleus. Cell autonomous antagonist of the canonical Wnt signaling pathway. May activate a second Wnt signaling pathway that controls planar cell polarity. Required for neuroblast specification. In Drosophila melanogaster (Fruit fly), this protein is Protein naked cuticle (nkd).